Consider the following 127-residue polypeptide: uncharacterized protein (127 aa).

The tract at residues 1-34 (MKNPESSGVSSSPQIQRVSPSSSSTSPSPPSIGT) is disordered. A compositionally biased stretch (low complexity) spans 9-34 (VSSSPQIQRVSPSSSSTSPSPPSIGT). 2 consecutive transmembrane segments (helical) span residues 47-67 (IAAVVVAVDVVDIMSVDPLAM) and 84-104 (TIAVDSITLLYTPICLCYLLV).

The protein resides in the membrane. This is an uncharacterized protein from Saccharomyces cerevisiae (strain ATCC 204508 / S288c) (Baker's yeast).